A 344-amino-acid polypeptide reads, in one-letter code: NADH-quinone oxidoreductase subunit H 2 (344 aa).

A run of 8 helical transmembrane segments spans residues 13 to 33 (LPIL…VAWL), 82 to 102 (ILFL…WAVI), 116 to 136 (ALLY…LAGW), 161 to 181 (MGFA…GEIV), 188 to 208 (FWHW…ISGV), 240 to 260 (LFFL…ALMF), 280 to 300 (VPGI…YLWF), and 319 to 339 (VFIP…VAQL).

This sequence belongs to the complex I subunit 1 family. NDH-1 is composed of 14 different subunits. Subunits NuoA, H, J, K, L, M, N constitute the membrane sector of the complex.

The protein localises to the cell inner membrane. The catalysed reaction is a quinone + NADH + 5 H(+)(in) = a quinol + NAD(+) + 4 H(+)(out). Functionally, NDH-1 shuttles electrons from NADH, via FMN and iron-sulfur (Fe-S) centers, to quinones in the respiratory chain. The immediate electron acceptor for the enzyme in this species is believed to be ubiquinone. Couples the redox reaction to proton translocation (for every two electrons transferred, four hydrogen ions are translocated across the cytoplasmic membrane), and thus conserves the redox energy in a proton gradient. This subunit may bind ubiquinone. This is NADH-quinone oxidoreductase subunit H 2 from Nitrosococcus oceani (strain ATCC 19707 / BCRC 17464 / JCM 30415 / NCIMB 11848 / C-107).